A 535-amino-acid polypeptide reads, in one-letter code: T-complex protein 1 subunit beta (535 aa).

Ala-2 bears the N-acetylalanine mark. Ser-3 bears the Phosphoserine mark. Lys-13 is subject to N6-acetyllysine. An ADP-binding site is contributed by Gly-44. ATP is bound at residue Gly-44. A Phosphoserine modification is found at Ser-60. Mg(2+) is bound at residue Asp-97. ADP-binding residues include Gly-98, Thr-99, Thr-100, and Ser-101. Gly-98, Thr-99, and Thr-100 together coordinate ATP. Position 154 is an N6-acetyllysine (Lys-154). Residues Ser-168 and Ser-169 each coordinate ADP. Lys-181 carries the N6-acetyllysine modification. A Glycyl lysine isopeptide (Lys-Gly) (interchain with G-Cter in SUMO2) cross-link involves residue Lys-248. The residue at position 260 (Ser-260) is a Phosphoserine. Position 261 is a phosphothreonine (Thr-261). ADP contacts are provided by Gly-410, Glu-495, and Lys-500. 2 residues coordinate ATP: Glu-495 and Lys-500.

This sequence belongs to the TCP-1 chaperonin family. Component of the chaperonin-containing T-complex (TRiC), a hexadecamer composed of two identical back-to-back stacked rings enclosing a protein folding chamber. Each ring is made up of eight different subunits: TCP1/CCT1, CCT2, CCT3, CCT4, CCT5, CCT6A/CCT6, CCT7, CCT8. Interacts with PACRG. Interacts with FLCN. Interacts with DLEC1. Interacts with SVEP1.

It localises to the cytoplasm. The catalysed reaction is ATP + H2O = ADP + phosphate + H(+). Functionally, component of the chaperonin-containing T-complex (TRiC), a molecular chaperone complex that assists the folding of actin, tubulin and other proteins upon ATP hydrolysis. The TRiC complex mediates the folding of WRAP53/TCAB1, thereby regulating telomere maintenance. As part of the TRiC complex may play a role in the assembly of BBSome, a complex involved in ciliogenesis regulating transports vesicles to the cilia. The chain is T-complex protein 1 subunit beta (CCT2) from Bos taurus (Bovine).